Reading from the N-terminus, the 405-residue chain is MADVNKVVLAYSGGLDTSVILKWLQDTYNCEVVTFTADLGQGEEVEPARAKAQAMGVKEIYIDDLREEFVRDFVFPMFRANTVYEGEYLLGTSIARPLIAKRLIEIANETGADAISHGATGKGNDQVRFELGAYALKPGVKVIAPWREWDLLSREKLMDYAEKHAIPIERHGKKKSPYSMDANLLHISYEGGVLEDTWTEHEEDMWRWTVSPEKAPDTPQYLELTYRNGDIVALDGVEMTPATVLATLNRIGGEHGIGRLDIVENRYVGMKSRGCYETPGGTIMLRAHRAIESITLDREVAHLKDELMPKYASLIYTGYWWSPERLMLQQMIDASQVNVNGVVRLKLYKGNVIVTGRKSDDSLFDANIATFEEDGGAYNQADAAGFIKLNALRMRIAANKGRKLF.

ATP is bound by residues 10 to 18 (AYSGGLDTS) and Ala-37. Residues Tyr-88 and Ser-93 each contribute to the L-citrulline site. Gly-118 is a binding site for ATP. Positions 120, 124, and 125 each coordinate L-aspartate. L-citrulline is bound at residue Asn-124. Residues Arg-128, Ser-179, Ser-188, Glu-264, and Tyr-276 each contribute to the L-citrulline site.

It belongs to the argininosuccinate synthase family. Type 1 subfamily. In terms of assembly, homotetramer.

The protein localises to the cytoplasm. The catalysed reaction is L-citrulline + L-aspartate + ATP = 2-(N(omega)-L-arginino)succinate + AMP + diphosphate + H(+). Its pathway is amino-acid biosynthesis; L-arginine biosynthesis; L-arginine from L-ornithine and carbamoyl phosphate: step 2/3. The sequence is that of Argininosuccinate synthase from Pseudomonas fluorescens (strain Pf0-1).